We begin with the raw amino-acid sequence, 334 residues long: Catabolite repressor/activator (334 aa).

The HTH lacI-type domain occupies 1 to 58 (MKLDEIARLAGVSRTTASYVINGKAKQYRVSDKTVEKVMAVVREHNYHPNAVAAGLRA). Positions 3 to 22 (LDEIARLAGVSRTTASYVIN) form a DNA-binding region, H-T-H motif.

As to quaternary structure, homotetramer.

Global transcriptional regulator, which plays an important role in the regulation of carbon metabolism. The protein is Catabolite repressor/activator (cra) of Escherichia coli O157:H7.